The chain runs to 194 residues: dCTP deaminase (194 aa).

DCTP-binding positions include 110–115 (RSSLAR), Asp128, 136–138 (VLE), Tyr171, Lys178, and Gln182. Glu138 serves as the catalytic Proton donor/acceptor.

The protein belongs to the dCTP deaminase family. Homotrimer.

The enzyme catalyses dCTP + H2O + H(+) = dUTP + NH4(+). Its pathway is pyrimidine metabolism; dUMP biosynthesis; dUMP from dCTP (dUTP route): step 1/2. In terms of biological role, catalyzes the deamination of dCTP to dUTP. This Glaesserella parasuis serovar 5 (strain SH0165) (Haemophilus parasuis) protein is dCTP deaminase.